A 205-amino-acid chain; its full sequence is ATP phosphoribosyltransferase (205 aa).

This sequence belongs to the ATP phosphoribosyltransferase family. Short subfamily. In terms of assembly, heteromultimer composed of HisG and HisZ subunits.

It is found in the cytoplasm. It carries out the reaction 1-(5-phospho-beta-D-ribosyl)-ATP + diphosphate = 5-phospho-alpha-D-ribose 1-diphosphate + ATP. The protein operates within amino-acid biosynthesis; L-histidine biosynthesis; L-histidine from 5-phospho-alpha-D-ribose 1-diphosphate: step 1/9. Its function is as follows. Catalyzes the condensation of ATP and 5-phosphoribose 1-diphosphate to form N'-(5'-phosphoribosyl)-ATP (PR-ATP). Has a crucial role in the pathway because the rate of histidine biosynthesis seems to be controlled primarily by regulation of HisG enzymatic activity. The protein is ATP phosphoribosyltransferase of Staphylococcus saprophyticus subsp. saprophyticus (strain ATCC 15305 / DSM 20229 / NCIMB 8711 / NCTC 7292 / S-41).